The following is an 82-amino-acid chain: Translational regulator CsrA (82 aa).

The protein belongs to the CsrA/RsmA family. Homodimer; the beta-strands of each monomer intercalate to form a hydrophobic core, while the alpha-helices form wings that extend away from the core.

Its subcellular location is the cytoplasm. Its function is as follows. A translational regulator that binds mRNA to regulate translation initiation and/or mRNA stability. Usually binds in the 5'-UTR at or near the Shine-Dalgarno sequence preventing ribosome-binding, thus repressing translation. Its main target seems to be the major flagellin gene, while its function is anatagonized by FliW. In Geobacillus kaustophilus (strain HTA426), this protein is Translational regulator CsrA.